Reading from the N-terminus, the 104-residue chain is Large ribosomal subunit protein cL38 (104 aa).

Residues 1–39 (MASVSSIFGCGVSMAPNSSLRNKAIRTERRSACGGLLIE) constitute a chloroplast transit peptide. Residues 42–76 (SRPQKKSTAHHMKTRPRKSRLSDRNRKPTVYAPLP) form a disordered region. Residues 44 to 60 (PQKKSTAHHMKTRPRKS) show a composition bias toward basic residues.

This sequence belongs to the chloroplast-specific ribosomal protein cL38 family. In terms of assembly, part of the 50S ribosomal subunit.

It is found in the plastid. It localises to the chloroplast. In Pisum sativum (Garden pea), this protein is Large ribosomal subunit protein cL38 (PSRP6).